The following is a 733-amino-acid chain: Hexamerin (733 aa).

The signal sequence occupies residues 1 to 17; the sequence is MKTALVLILATATLAVA. N-linked (GlcNAc...) asparagine glycosylation is found at Asn199, Asn234, and Asn431.

The protein belongs to the hemocyanin family. Homohexamer.

It localises to the secreted. Its subcellular location is the extracellular space. Functionally, larval storage protein (LSP) which may serve as a store of amino acids for synthesis of adult proteins. In Blaberus discoidalis (Tropical cockroach), this protein is Hexamerin.